Here is a 38-residue protein sequence, read N- to C-terminus: Large ribosomal subunit protein bL36 (38 aa).

Belongs to the bacterial ribosomal protein bL36 family.

The sequence is that of Large ribosomal subunit protein bL36 from Pseudoalteromonas atlantica (strain T6c / ATCC BAA-1087).